We begin with the raw amino-acid sequence, 601 residues long: Glutamyl-tRNA(Gln) amidotransferase subunit B, mitochondrial (601 aa).

The N-terminal 52 residues, M1–S52, are a transit peptide targeting the mitochondrion.

This sequence belongs to the GatB/GatE family. GatB subfamily. As to quaternary structure, subunit of the heterotrimeric GatCAB amidotransferase (AdT) complex, composed of A, B and C subunits.

Its subcellular location is the mitochondrion. The enzyme catalyses L-glutamyl-tRNA(Gln) + L-glutamine + ATP + H2O = L-glutaminyl-tRNA(Gln) + L-glutamate + ADP + phosphate + H(+). In terms of biological role, allows the formation of correctly charged Gln-tRNA(Gln) through the transamidation of misacylated Glu-tRNA(Gln) in the mitochondria. The reaction takes place in the presence of glutamine and ATP through an activated gamma-phospho-Glu-tRNA(Gln). The sequence is that of Glutamyl-tRNA(Gln) amidotransferase subunit B, mitochondrial from Neosartorya fischeri (strain ATCC 1020 / DSM 3700 / CBS 544.65 / FGSC A1164 / JCM 1740 / NRRL 181 / WB 181) (Aspergillus fischerianus).